The following is a 432-amino-acid chain: Adenosine 3'-phospho 5'-phosphosulfate transporter 1 (432 aa).

9 helical membrane passes run 5 to 25 (WWAVVVLAAFPSLGAGGETPE), 40 to 60 (VVNAAGYASFMVPGYLLVQYF), 109 to 129 (ALKLLFCATGLQVSYLTWGVL), 154 to 174 (FLVLMNRVLALIVAGLSCVLC), 238 to 258 (WEYLTATLISIGVSMFLLSSG), 265 to 285 (PATTLSGLILLAGYIAFDSFT), 299 to 319 (SVQMMFGVNFFSCLFTVGSLL), 353 to 373 (LFIFYTIGQFGAAVFTIIMTL), and 387 to 407 (GHTVTVVGGLGVAVVFAALLL). At Ser-427 the chain carries Phosphoserine.

It belongs to the nucleotide-sugar transporter family. SLC35B subfamily. Highly expressed in the placenta, pancreas, mammary gland and skeletal muscle. Weakly or not expressed in colon, heart and prostate. Expressed in the brain, predominantly in frontal lobe gray matter, subcortical frontal white matter and cerebellum.

The protein localises to the golgi apparatus membrane. The enzyme catalyses 3'-phosphoadenylyl sulfate(in) + adenosine 3',5'-bisphosphate(out) = 3'-phosphoadenylyl sulfate(out) + adenosine 3',5'-bisphosphate(in). In terms of biological role, probably functions as a 3'-phosphoadenylyl sulfate:adenosine 3',5'-bisphosphate antiporter at the Golgi membranes. Mediates the transport from the cytosol into the lumen of the Golgi of 3'-phosphoadenylyl sulfate/adenosine 3'-phospho 5'-phosphosulfate (PAPS), a universal sulfuryl donor for sulfation events that take place in that compartment. The sequence is that of Adenosine 3'-phospho 5'-phosphosulfate transporter 1 from Homo sapiens (Human).